The following is a 260-amino-acid chain: Ribosomal RNA small subunit methyltransferase J (260 aa).

Residues 108–109 (RD), 124–125 (ER), and aspartate 178 contribute to the S-adenosyl-L-methionine site.

This sequence belongs to the methyltransferase superfamily. RsmJ family.

The protein resides in the cytoplasm. It carries out the reaction guanosine(1516) in 16S rRNA + S-adenosyl-L-methionine = N(2)-methylguanosine(1516) in 16S rRNA + S-adenosyl-L-homocysteine + H(+). Functionally, specifically methylates the guanosine in position 1516 of 16S rRNA. This chain is Ribosomal RNA small subunit methyltransferase J, found in Ectopseudomonas mendocina (strain ymp) (Pseudomonas mendocina).